Consider the following 84-residue polypeptide: Anthracycline acyl carrier protein DpsG (84 aa).

The 78-residue stretch at 3–80 folds into the Carrier domain; that stretch reads ELSLAELREI…SMLIFVNERL (78 aa). At Ser-40 the chain carries O-(pantetheine 4'-phosphoryl)serine.

It participates in antibiotic biosynthesis; daunorubicin biosynthesis. The protein operates within antibiotic biosynthesis; carminomycin biosynthesis. It functions in the pathway antibiotic biosynthesis; rhodomycin biosynthesis. Its pathway is antibiotic biosynthesis; aclacinomycin biosynthesis. Involved in the biosynthesis of aklanonate which is an important precursor common to the formation of the clinically significant anthracyclines such as carminomycin, daunorubicin (daunomycin), rhodomycin, aclacinomycin T (aklavin) and aclacinomycin A (aclarubicin). These compounds are aromatic polyketide antibiotics that exhibit high cytotoxicity and are widely applied in the chemotherapy of a variety of cancers. This Streptomyces peucetius protein is Anthracycline acyl carrier protein DpsG (dpsG).